The chain runs to 159 residues: Ribosomal RNA large subunit methyltransferase H (159 aa).

S-adenosyl-L-methionine is bound by residues L76, G108, and 127 to 132; that span reads FSKMTF.

This sequence belongs to the RNA methyltransferase RlmH family. In terms of assembly, homodimer.

The protein localises to the cytoplasm. The enzyme catalyses pseudouridine(1915) in 23S rRNA + S-adenosyl-L-methionine = N(3)-methylpseudouridine(1915) in 23S rRNA + S-adenosyl-L-homocysteine + H(+). Its function is as follows. Specifically methylates the pseudouridine at position 1915 (m3Psi1915) in 23S rRNA. The chain is Ribosomal RNA large subunit methyltransferase H from Exiguobacterium sibiricum (strain DSM 17290 / CCUG 55495 / CIP 109462 / JCM 13490 / 255-15).